The sequence spans 469 residues: 3-isopropylmalate dehydratase large subunit (469 aa).

[4Fe-4S] cluster contacts are provided by Cys-350, Cys-410, and Cys-413.

It belongs to the aconitase/IPM isomerase family. LeuC type 1 subfamily. In terms of assembly, heterodimer of LeuC and LeuD. Requires [4Fe-4S] cluster as cofactor.

It catalyses the reaction (2R,3S)-3-isopropylmalate = (2S)-2-isopropylmalate. It functions in the pathway amino-acid biosynthesis; L-leucine biosynthesis; L-leucine from 3-methyl-2-oxobutanoate: step 2/4. Functionally, catalyzes the isomerization between 2-isopropylmalate and 3-isopropylmalate, via the formation of 2-isopropylmaleate. This chain is 3-isopropylmalate dehydratase large subunit, found in Agrobacterium fabrum (strain C58 / ATCC 33970) (Agrobacterium tumefaciens (strain C58)).